The following is a 406-amino-acid chain: MQTLDTPLTPTSTPSLFDTTIHRRKTRGVKVGDITIGGGYPVVVQSMINEDTLDIDGSVAAIRRLHEIGCEIVRVTVPSMAHAKALAEIKEKLIKTYKAVPLVADVHHNGMKIALEVAKHVDKVRINPGLYVFEKPRADRTEYTPTEFEEIGEKIRETLKPLVLTLKEQDKAMRIGVNHGSLAERMLFTYGDTPEGMVESALEFIRICESLEFYNIVISLKASRVPVMLAAYRLMVKRMDELGMDYPLHLGVTEAGDGEYGRIKSTAGIGTLLAEGIGDTIRVSLTEAPEKEIPVCYSILQALGLRKTMVEYVACPSCGRTLFNLEEVLHKVREATKHLTGLDIAVMGCIVNGPGEMADADYGYVGKQAGYISLYRGREEIKKVPEDQGVEELINLIKADGRWVDP.

Positions 315, 318, 349, and 356 each coordinate [4Fe-4S] cluster.

This sequence belongs to the IspG family. [4Fe-4S] cluster is required as a cofactor.

It catalyses the reaction (2E)-4-hydroxy-3-methylbut-2-enyl diphosphate + 2 oxidized [2Fe-2S]-[ferredoxin] + H2O = 2-C-methyl-D-erythritol 2,4-cyclic diphosphate + 2 reduced [2Fe-2S]-[ferredoxin] + H(+). It participates in isoprenoid biosynthesis; isopentenyl diphosphate biosynthesis via DXP pathway; isopentenyl diphosphate from 1-deoxy-D-xylulose 5-phosphate: step 5/6. Converts 2C-methyl-D-erythritol 2,4-cyclodiphosphate (ME-2,4cPP) into 1-hydroxy-2-methyl-2-(E)-butenyl 4-diphosphate. This Gloeothece citriformis (strain PCC 7424) (Cyanothece sp. (strain PCC 7424)) protein is 4-hydroxy-3-methylbut-2-en-1-yl diphosphate synthase (ferredoxin).